Consider the following 642-residue polypeptide: Threonine--tRNA ligase (642 aa).

Residues 1–61 (MPVITLPDGS…ENDTQLSIIT (61 aa)) enclose the TGS domain. The interval 243-534 (DHRKIGKQLD…LTEEFAGFFP (292 aa)) is catalytic. Lys286 bears the N6-acetyllysine mark. Residues Cys334, His385, and His511 each coordinate Zn(2+).

The protein belongs to the class-II aminoacyl-tRNA synthetase family. Homodimer. Requires Zn(2+) as cofactor.

The protein localises to the cytoplasm. The catalysed reaction is tRNA(Thr) + L-threonine + ATP = L-threonyl-tRNA(Thr) + AMP + diphosphate + H(+). Functionally, catalyzes the attachment of threonine to tRNA(Thr) in a two-step reaction: L-threonine is first activated by ATP to form Thr-AMP and then transferred to the acceptor end of tRNA(Thr). Also edits incorrectly charged L-seryl-tRNA(Thr). The protein is Threonine--tRNA ligase of Shigella dysenteriae serotype 1 (strain Sd197).